A 364-amino-acid polypeptide reads, in one-letter code: Isoflavone 4'-O-methyltransferase (364 aa).

Residues 206–209 (VGGG), Asp230, 230–231 (DQ), 250–251 (DM), and Lys264 contribute to the S-adenosyl-L-methionine site. His268 (proton acceptor) is an active-site residue.

This sequence belongs to the class I-like SAM-binding methyltransferase superfamily. Cation-independent O-methyltransferase family. COMT subfamily. In terms of assembly, homodimer.

The enzyme catalyses a 4'-hydroxyisoflavone + S-adenosyl-L-methionine = a 4'-methoxyisoflavone + S-adenosyl-L-homocysteine + H(+). The catalysed reaction is (2R,3S)-2,4',7-trihydroxyisoflavanone + S-adenosyl-L-methionine = (2R,3S)-2,7-dihydroxy-4'-methoxyisoflavanone + S-adenosyl-L-homocysteine + H(+). Its function is as follows. 2-hydroxyisoflavanone 4'-O-methyltransferase involved in the biosynthesis of the phytoalexin medicarpin. Has also an in vitro (+)-6a-hydroxymaackiain-3-0-methyltransferase activity, converting the pterocarpan 6a-hydroxymaackiain into pisatin. No activity with di- or trihydroxylated isoflavones, including daidzein and genistein, or with (-)-medicarpin and maackiain. The dual activity for either 3- or 4'-O-methylation depends upon substrate availability. This Medicago truncatula (Barrel medic) protein is Isoflavone 4'-O-methyltransferase (HI4'OMT).